The following is an 82-amino-acid chain: Immediate early response 3-interacting protein 1 (82 aa).

A run of 2 helical transmembrane segments spans residues 2–22 and 62–82; these read AFTL…IAVL and VMRV…LLFG.

This sequence belongs to the YOS1 family.

It is found in the endoplasmic reticulum membrane. In terms of biological role, regulator of endoplasmic reticulum secretion that acts as a key determinant of brain size. Required for secretion of extracellular matrix proteins. Required for correct brain development by depositing sufficient extracellular matrix proteins for tissue integrity and the proliferation of neural progenitors. Acts as a regulator of the unfolded protein response (UPR). The polypeptide is Immediate early response 3-interacting protein 1 (Rattus norvegicus (Rat)).